Reading from the N-terminus, the 385-residue chain is SH3 domain-binding protein 5-like (385 aa).

Residues 1–58 (MAELRQIPGGRETPQGELRPEVVEDEVPRSPVAEEPGGGGSNSSEAKLSPREEEELDP) are disordered. A Phosphothreonine modification is found at Thr-13. A compositionally biased stretch (basic and acidic residues) spans 18-28 (LRPEVVEDEVP). Residues Ser-30 and Ser-49 each carry the phosphoserine modification. Coiled coils occupy residues 59-140 (RIQE…YERA) and 169-272 (WQEM…EQIH). The segment at 272–328 (HARRRGQPAHTPGQRRSSPVGAEAGPDGGEDADSGIIEGAEGGGLEEGVSLGPGAAP) is disordered. Over residues 318 to 328 (EGVSLGPGAAP) the composition is skewed to low complexity. Phosphoserine is present on residues Ser-343, Ser-350, Ser-358, and Ser-362. Positions 359 to 385 (DHTSLDGQELGPRSGGRGGRHQRSISL) are disordered. Basic residues predominate over residues 376–385 (GGRHQRSISL).

The protein belongs to the SH3BP5 family.

Its function is as follows. Functions as a guanine nucleotide exchange factor (GEF) for RAB11A. The sequence is that of SH3 domain-binding protein 5-like (SH3BP5L) from Bos taurus (Bovine).